The primary structure comprises 322 residues: MADVLTELPGVGPSTAEKLIEAGYLDFMKIATSTIGELTDIEGISEKAAAKMIMAARDLCDLGFKSGVELLKQRQSVWRLSTGSKELDTVLAGGLESQSVTEFAGMYGSGKTQIMHQTCVNLQMAEKIFADLEGVVEEEMENPKAVYIDTEGTFRPERVVQMAEGAGIDGQTVLDNTFVARAYNSDMQMLFAEKIEDLIKGGNNIKLVIIDSLTSTFRNEFTGRGKLAERQQKLGRHMATLNKLADLYNCIVLVTNQVAAKPDAFFGVAEQAIGGHVVGHAATFRFFLRKSKGDKRVAKLYDSPHLPDSEAVFRITEKGIQD.

An ATP-binding site is contributed by 105-112 (GMYGSGKT).

Belongs to the eukaryotic RecA-like protein family.

Functionally, involved in DNA repair and in homologous recombination. Binds and assemble on single-stranded DNA to form a nucleoprotein filament. Hydrolyzes ATP in a ssDNA-dependent manner and promotes DNA strand exchange between homologous DNA molecules. The polypeptide is DNA repair and recombination protein RadA (Methanococcus maripaludis (strain C5 / ATCC BAA-1333)).